Here is a 274-residue protein sequence, read N- to C-terminus: Acyl-[acyl-carrier-protein]--UDP-N-acetylglucosamine O-acyltransferase (274 aa).

Belongs to the transferase hexapeptide repeat family. LpxA subfamily. As to quaternary structure, homotrimer.

The protein localises to the cytoplasm. The catalysed reaction is a (3R)-hydroxyacyl-[ACP] + UDP-N-acetyl-alpha-D-glucosamine = a UDP-3-O-[(3R)-3-hydroxyacyl]-N-acetyl-alpha-D-glucosamine + holo-[ACP]. It participates in glycolipid biosynthesis; lipid IV(A) biosynthesis; lipid IV(A) from (3R)-3-hydroxytetradecanoyl-[acyl-carrier-protein] and UDP-N-acetyl-alpha-D-glucosamine: step 1/6. Its function is as follows. Involved in the biosynthesis of lipid A, a phosphorylated glycolipid that anchors the lipopolysaccharide to the outer membrane of the cell. This Bartonella bacilliformis (strain ATCC 35685 / KC583 / Herrer 020/F12,63) protein is Acyl-[acyl-carrier-protein]--UDP-N-acetylglucosamine O-acyltransferase.